We begin with the raw amino-acid sequence, 215 residues long: Ribonuclease T (215 aa).

The Exonuclease domain maps to Val-20–Phe-194. Mg(2+) contacts are provided by Asp-23, Glu-25, His-181, and Asp-186. The active-site Proton donor/acceptor is His-181.

Belongs to the RNase T family. In terms of assembly, homodimer. It depends on Mg(2+) as a cofactor.

Its function is as follows. Trims short 3' overhangs of a variety of RNA species, leaving a one or two nucleotide 3' overhang. Responsible for the end-turnover of tRNA: specifically removes the terminal AMP residue from uncharged tRNA (tRNA-C-C-A). Also appears to be involved in tRNA biosynthesis. This is Ribonuclease T from Yersinia pestis.